Consider the following 234-residue polypeptide: Probable transcriptional regulatory protein PSPPH_2212 (234 aa).

It belongs to the TACO1 family.

The protein localises to the cytoplasm. The sequence is that of Probable transcriptional regulatory protein PSPPH_2212 from Pseudomonas savastanoi pv. phaseolicola (strain 1448A / Race 6) (Pseudomonas syringae pv. phaseolicola (strain 1448A / Race 6)).